The primary structure comprises 151 residues: UPF0178 protein ESA_02916 (151 aa).

Belongs to the UPF0178 family.

The polypeptide is UPF0178 protein ESA_02916 (Cronobacter sakazakii (strain ATCC BAA-894) (Enterobacter sakazakii)).